We begin with the raw amino-acid sequence, 256 residues long: 5-oxoprolinase subunit A (256 aa).

The protein belongs to the LamB/PxpA family. As to quaternary structure, forms a complex composed of PxpA, PxpB and PxpC.

It catalyses the reaction 5-oxo-L-proline + ATP + 2 H2O = L-glutamate + ADP + phosphate + H(+). In terms of biological role, catalyzes the cleavage of 5-oxoproline to form L-glutamate coupled to the hydrolysis of ATP to ADP and inorganic phosphate. This is 5-oxoprolinase subunit A from Cutibacterium acnes (strain DSM 16379 / KPA171202) (Propionibacterium acnes).